The chain runs to 917 residues: Alanine--tRNA ligase (917 aa).

Zn(2+) contacts are provided by H592, H596, C694, and H698.

The protein belongs to the class-II aminoacyl-tRNA synthetase family. Zn(2+) is required as a cofactor.

It is found in the cytoplasm. It carries out the reaction tRNA(Ala) + L-alanine + ATP = L-alanyl-tRNA(Ala) + AMP + diphosphate. Its function is as follows. Catalyzes the attachment of alanine to tRNA(Ala) in a two-step reaction: alanine is first activated by ATP to form Ala-AMP and then transferred to the acceptor end of tRNA(Ala). Also edits incorrectly charged Ser-tRNA(Ala) and Gly-tRNA(Ala) via its editing domain. This is Alanine--tRNA ligase from Sorangium cellulosum (strain So ce56) (Polyangium cellulosum (strain So ce56)).